The following is a 779-amino-acid chain: Filament-like plant protein 1 (779 aa).

Basic and acidic residues predominate over residues 1–14 (MEKRKRESSERSFG). 3 disordered regions span residues 1 to 55 (MEKR…ETEK), 253 to 274 (ASFN…MDVS), and 315 to 336 (PETP…VVVP). A coiled-coil region spans residues 47-200 (VSLEVETEKE…KENVMLRHEL (154 aa)). Positions 256 to 272 (NDHRSTDSHSDGGERMD) are enriched in basic and acidic residues. A compositionally biased stretch (low complexity) spans 324-336 (SGPESVTEEVVVP). The stretch at 337–674 (SENSLASEIE…ANCQKTIASL (338 aa)) forms a coiled coil. The span at 718-731 (FMTRNHPESIKPTK) shows a compositional bias: basic and acidic residues. A disordered region spans residues 718–764 (FMTRNHPESIKPTKETSPSSSSSTASAAVSMPVSTNRGSSEKNRNGF). Over residues 733-752 (TSPSSSSSTASAAVSMPVST) the composition is skewed to low complexity.

The protein belongs to the FPP family. As to quaternary structure, interacts with WPP/MAF proteins.

The polypeptide is Filament-like plant protein 1 (FPP1) (Arabidopsis thaliana (Mouse-ear cress)).